We begin with the raw amino-acid sequence, 146 residues long: FAD synthase (146 aa).

Residues 9 to 10, 14 to 17, and Asp-92 each bind ATP; these read TF and HPGH.

The protein belongs to the archaeal FAD synthase family. Homodimer. A divalent metal cation serves as cofactor.

The catalysed reaction is FMN + ATP + H(+) = FAD + diphosphate. The protein operates within cofactor biosynthesis; FAD biosynthesis; FAD from FMN: step 1/1. Catalyzes the transfer of the AMP portion of ATP to flavin mononucleotide (FMN) to produce flavin adenine dinucleotide (FAD) coenzyme. This is FAD synthase from Halobacterium salinarum (strain ATCC 29341 / DSM 671 / R1).